A 702-amino-acid polypeptide reads, in one-letter code: Ribosomal RNA large subunit methyltransferase K/L (702 aa).

The THUMP domain occupies 43–154 (LVYQSLMWSR…KETASIALDL (112 aa)).

This sequence belongs to the methyltransferase superfamily. RlmKL family.

The protein resides in the cytoplasm. The enzyme catalyses guanosine(2445) in 23S rRNA + S-adenosyl-L-methionine = N(2)-methylguanosine(2445) in 23S rRNA + S-adenosyl-L-homocysteine + H(+). The catalysed reaction is guanosine(2069) in 23S rRNA + S-adenosyl-L-methionine = N(2)-methylguanosine(2069) in 23S rRNA + S-adenosyl-L-homocysteine + H(+). Specifically methylates the guanine in position 2445 (m2G2445) and the guanine in position 2069 (m7G2069) of 23S rRNA. The protein is Ribosomal RNA large subunit methyltransferase K/L of Shigella boydii serotype 18 (strain CDC 3083-94 / BS512).